A 62-amino-acid polypeptide reads, in one-letter code: Photosystem II reaction center protein Z (62 aa).

2 helical membrane passes run 8-28 and 41-61; these read ALVA…VAYA and WLGS…NFFV.

This sequence belongs to the PsbZ family. In terms of assembly, PSII is composed of 1 copy each of membrane proteins PsbA, PsbB, PsbC, PsbD, PsbE, PsbF, PsbH, PsbI, PsbJ, PsbK, PsbL, PsbM, PsbT, PsbX, PsbY, PsbZ, Psb30/Ycf12, peripheral proteins PsbO, CyanoQ (PsbQ), PsbU, PsbV and a large number of cofactors. It forms dimeric complexes.

The protein resides in the cellular thylakoid membrane. Functionally, may control the interaction of photosystem II (PSII) cores with the light-harvesting antenna, regulates electron flow through the 2 photosystem reaction centers. PSII is a light-driven water plastoquinone oxidoreductase, using light energy to abstract electrons from H(2)O, generating a proton gradient subsequently used for ATP formation. The sequence is that of Photosystem II reaction center protein Z from Nostoc sp. (strain PCC 7120 / SAG 25.82 / UTEX 2576).